The chain runs to 671 residues: Probable potassium transport system protein Kup (671 aa).

A disordered region spans residues 1–43 (MSQIPSPNDPASTGAAPSSAAVPAGPSATPAPSPTAGFSLPGH). Residues 10 to 37 (PASTGAAPSSAAVPAGPSATPAPSPTAG) are compositionally biased toward low complexity. The next 12 membrane-spanning stretches (helical) occupy residues 52 to 72 (LAAL…TSPL), 92 to 112 (VLGV…FKYM), 147 to 167 (LMLG…TPAI), 181 to 201 (PAME…LFLF), 209 to 229 (VGAV…VLGV), 255 to 275 (GWHG…GEAL), 291 to 311 (WLGL…ALLL), 323 to 343 (LLAP…AAIV), 381 to 401 (IYLP…VLGF), 407 to 427 (LASA…LLFH), 441 to 461 (AWPL…ANVV), and 465 to 485 (DGGW…STWK).

The protein belongs to the HAK/KUP transporter (TC 2.A.72) family.

It localises to the cell inner membrane. The catalysed reaction is K(+)(in) + H(+)(in) = K(+)(out) + H(+)(out). In terms of biological role, transport of potassium into the cell. Likely operates as a K(+):H(+) symporter. This Anaeromyxobacter dehalogenans (strain 2CP-1 / ATCC BAA-258) protein is Probable potassium transport system protein Kup.